A 95-amino-acid chain; its full sequence is Large ribosomal subunit protein bL25 (95 aa).

This sequence belongs to the bacterial ribosomal protein bL25 family. As to quaternary structure, part of the 50S ribosomal subunit; part of the 5S rRNA/L5/L18/L25 subcomplex. Contacts the 5S rRNA. Binds to the 5S rRNA independently of L5 and L18.

Functionally, this is one of the proteins that binds to the 5S RNA in the ribosome where it forms part of the central protuberance. The chain is Large ribosomal subunit protein bL25 from Haemophilus influenzae (strain ATCC 51907 / DSM 11121 / KW20 / Rd).